The sequence spans 292 residues: NAD kinase (292 aa).

The Proton acceptor role is filled by aspartate 73. Residues aspartate 73–glycine 74, asparagine 147–glutamate 148, histidine 158, arginine 175, aspartate 177, threonine 188–serine 193, and glutamine 247 each bind NAD(+).

It belongs to the NAD kinase family. A divalent metal cation serves as cofactor.

Its subcellular location is the cytoplasm. It catalyses the reaction NAD(+) + ATP = ADP + NADP(+) + H(+). In terms of biological role, involved in the regulation of the intracellular balance of NAD and NADP, and is a key enzyme in the biosynthesis of NADP. Catalyzes specifically the phosphorylation on 2'-hydroxyl of the adenosine moiety of NAD to yield NADP. This is NAD kinase from Photorhabdus laumondii subsp. laumondii (strain DSM 15139 / CIP 105565 / TT01) (Photorhabdus luminescens subsp. laumondii).